Here is a 317-residue protein sequence, read N- to C-terminus: 4-diphosphocytidyl-2-C-methyl-D-erythritol kinase (317 aa).

Lysine 11 is an active-site residue. 99–109 (PVAAGLAGGST) contacts ATP. Residue aspartate 141 is part of the active site.

Belongs to the GHMP kinase family. IspE subfamily.

The catalysed reaction is 4-CDP-2-C-methyl-D-erythritol + ATP = 4-CDP-2-C-methyl-D-erythritol 2-phosphate + ADP + H(+). It participates in isoprenoid biosynthesis; isopentenyl diphosphate biosynthesis via DXP pathway; isopentenyl diphosphate from 1-deoxy-D-xylulose 5-phosphate: step 3/6. Functionally, catalyzes the phosphorylation of the position 2 hydroxy group of 4-diphosphocytidyl-2C-methyl-D-erythritol. The protein is 4-diphosphocytidyl-2-C-methyl-D-erythritol kinase of Trichormus variabilis (strain ATCC 29413 / PCC 7937) (Anabaena variabilis).